The chain runs to 632 residues: Lipoma-preferred partner homolog (632 aa).

Disordered stretches follow at residues 1 to 118 and 135 to 249; these read MSHP…RSSL and SSPY…RSYN. Residues 26–40 are compositionally biased toward polar residues; sequence THSFGTPSISVSTQQ. Residues 41-53 are compositionally biased toward low complexity; it reads PPKKFAPVVAPKP. K109 carries the post-translational modification N6-acetyllysine. Residues S117 and S152 each carry the phosphoserine modification. Low complexity predominate over residues 144-160; sequence PGSSSSIASPPVSTPVT. Composition is skewed to polar residues over residues 172–182 and 206–239; these read PLTATKKSATK and SYST…SSGQ. Residue Y241 is modified to Phosphotyrosine. R246 is subject to Omega-N-methylarginine. K324 participates in a covalent cross-link: Glycyl lysine isopeptide (Lys-Gly) (interchain with G-Cter in SUMO1). LIM zinc-binding domains follow at residues 434 to 493, 494 to 554, and 555 to 623; these read GRCA…INTL, EQCS…KFAP, and RCSV…RIRV.

It belongs to the zyxin/ajuba family. In terms of assembly, interacts with PDZ domains of SCRIB, with VASP and with ACTN1/alpha-actinin.

The protein resides in the nucleus. It localises to the cytoplasm. It is found in the cell junction. In terms of biological role, may play a structural role at sites of cell adhesion in maintaining cell shape and motility. In addition to these structural functions, it may also be implicated in signaling events and activation of gene transcription. May be involved in signal transduction from cell adhesion sites to the nucleus allowing successful integration of signals arising from soluble factors and cell-cell adhesion. Also suggested to serve as a scaffold protein upon which distinct protein complexes are assembled in the cytoplasm and in the nucleus. The polypeptide is Lipoma-preferred partner homolog (Lpp) (Rattus norvegicus (Rat)).